A 359-amino-acid polypeptide reads, in one-letter code: Fructose-bisphosphate aldolase (359 aa).

S50 serves as a coordination point for D-glyceraldehyde 3-phosphate. The active-site Proton donor is the D83. Positions 84, 105, 142, and 198 each coordinate Zn(2+). G199 serves as a coordination point for dihydroxyacetone phosphate. H232 serves as a coordination point for Zn(2+). Dihydroxyacetone phosphate-binding positions include G233–S235 and N275–T278.

Belongs to the class II fructose-bisphosphate aldolase family. Requires Zn(2+) as cofactor.

It catalyses the reaction beta-D-fructose 1,6-bisphosphate = D-glyceraldehyde 3-phosphate + dihydroxyacetone phosphate. The protein operates within carbohydrate degradation; glycolysis; D-glyceraldehyde 3-phosphate and glycerone phosphate from D-glucose: step 4/4. In terms of biological role, catalyzes the aldol condensation of dihydroxyacetone phosphate (DHAP or glycerone-phosphate) with glyceraldehyde 3-phosphate (G3P) to form fructose 1,6-bisphosphate (FBP) in gluconeogenesis and the reverse reaction in glycolysis. This chain is Fructose-bisphosphate aldolase (fba), found in Nostoc commune.